A 123-amino-acid chain; its full sequence is Small ribosomal subunit protein uS12 (123 aa).

The interval 1 to 32 (MPTIQQLVRKGRKDKKAKVKTAALKGSPQRRG) is disordered. Residues 9-19 (RKGRKDKKAKV) show a composition bias toward basic residues. 3-methylthioaspartic acid is present on Asp89.

Belongs to the universal ribosomal protein uS12 family. As to quaternary structure, part of the 30S ribosomal subunit. Contacts proteins S8 and S17. May interact with IF1 in the 30S initiation complex.

Functionally, with S4 and S5 plays an important role in translational accuracy. Interacts with and stabilizes bases of the 16S rRNA that are involved in tRNA selection in the A site and with the mRNA backbone. Located at the interface of the 30S and 50S subunits, it traverses the body of the 30S subunit contacting proteins on the other side and probably holding the rRNA structure together. The combined cluster of proteins S8, S12 and S17 appears to hold together the shoulder and platform of the 30S subunit. In Corynebacterium kroppenstedtii (strain DSM 44385 / JCM 11950 / CIP 105744 / CCUG 35717), this protein is Small ribosomal subunit protein uS12.